The following is a 460-amino-acid chain: Chromosomal replication initiator protein DnaA (460 aa).

The domain I, interacts with DnaA modulators stretch occupies residues 1-73 (MEISIDSLWS…ANVVQSILGH (73 aa)). A domain II region spans residues 73–116 (HPVEIYITVAKGEEFEEIGGGGAWELPTTNSIYETPNQNRQPNT). The tract at residues 117-333 (ELNAKYVFSR…GALTRALAYI (217 aa)) is domain III, AAA+ region. Positions 161, 163, 164, and 165 each coordinate ATP. The interval 334 to 460 (SIWGLPMTVA…MNSRSRKPSL (127 aa)) is domain IV, binds dsDNA.

The protein belongs to the DnaA family. In terms of assembly, oligomerizes as a right-handed, spiral filament on DNA at oriC.

Its subcellular location is the cytoplasm. Functionally, plays an essential role in the initiation and regulation of chromosomal replication. ATP-DnaA binds to the origin of replication (oriC) to initiate formation of the DNA replication initiation complex once per cell cycle. Binds the DnaA box (a 9 base pair repeat at the origin) and separates the double-stranded (ds)DNA. Forms a right-handed helical filament on oriC DNA; dsDNA binds to the exterior of the filament while single-stranded (ss)DNA is stabiized in the filament's interior. The ATP-DnaA-oriC complex binds and stabilizes one strand of the AT-rich DNA unwinding element (DUE), permitting loading of DNA polymerase. After initiation quickly degrades to an ADP-DnaA complex that is not apt for DNA replication. Binds acidic phospholipids. The polypeptide is Chromosomal replication initiator protein DnaA (Trichormus variabilis (strain ATCC 29413 / PCC 7937) (Anabaena variabilis)).